The primary structure comprises 139 residues: Gas vesicle protein A (139 aa).

Residues E113–R139 form a disordered region. Residues A129–R139 show a composition bias toward basic residues.

It belongs to the gas vesicle GvpA family. The gas vesicle shell is 2 nm thick and consists of a single layer of this protein. It forms helical ribs nearly perpendicular to the long axis of the vesicle.

The protein localises to the gas vesicle shell. Its function is as follows. Gas vesicles are hollow, gas filled proteinaceous nanostructures found in some microorganisms. During planktonic growth they allow positioning of the organism at a favorable depth for light or nutrient acquisition. GvpA forms the protein shell. This Mycobacterium sp. (strain JLS) protein is Gas vesicle protein A.